The following is a 397-amino-acid chain: Endoglucanase (397 aa).

Glutamate 194 (proton donor) is an active-site residue. Catalysis depends on glutamate 317, which acts as the Nucleophile.

It belongs to the glycosyl hydrolase 5 (cellulase A) family.

It carries out the reaction Endohydrolysis of (1-&gt;4)-beta-D-glucosidic linkages in cellulose, lichenin and cereal beta-D-glucans.. The protein is Endoglucanase of Paenibacillus polymyxa (Bacillus polymyxa).